The following is a 182-amino-acid chain: Hexose transport activator protein (182 aa).

The interval 46–65 is disordered; sequence GIWGPMEKKPGGVGKKKGSE.

Functionally, multicopy expression suppresses glucose-uptake defects in various yeast mutants. The polypeptide is Hexose transport activator protein (AHT1) (Saccharomyces cerevisiae (strain ATCC 204508 / S288c) (Baker's yeast)).